The chain runs to 160 residues: Phosphopantetheine adenylyltransferase (160 aa).

Residue Ser9 participates in substrate binding. ATP is bound by residues 9-10 and His17; that span reads SF. 3 residues coordinate substrate: Lys41, Leu73, and Arg87. ATP-binding positions include 88–90, Glu98, and 123–129; these read GLR and YTFLSSS.

The protein belongs to the bacterial CoaD family. As to quaternary structure, homohexamer. Requires Mg(2+) as cofactor.

It is found in the cytoplasm. The enzyme catalyses (R)-4'-phosphopantetheine + ATP + H(+) = 3'-dephospho-CoA + diphosphate. It participates in cofactor biosynthesis; coenzyme A biosynthesis; CoA from (R)-pantothenate: step 4/5. Functionally, reversibly transfers an adenylyl group from ATP to 4'-phosphopantetheine, yielding dephospho-CoA (dPCoA) and pyrophosphate. The protein is Phosphopantetheine adenylyltransferase of Dictyoglomus turgidum (strain DSM 6724 / Z-1310).